The sequence spans 564 residues: uncharacterized protein (564 aa).

8 consecutive transmembrane segments (helical) span residues 12–32, 97–119, 139–161, 188–208, 213–233, 277–297, 306–326, and 348–368; these read TYYLWIALFLLLLYVSPLFIL, MTAYAISQTVTRVVAFFGMYVLL, AFALTPFWPSGMLSTLGYPLALW, FVLGFFFFLAGMACFWLYDAI, WNLMFLGSIAFMTSIYLFVEY, MTVHTVVILPILMVVFAALLF, NVYLFLCVLNYGLSLWYAFWF, and FHFLRPLVIYVSFALALYLIW.

It localises to the cell membrane. This is an uncharacterized protein from Bacillus subtilis (strain 168).